Consider the following 420-residue polypeptide: Protein disulfide isomerase Creld1 (420 aa).

Positions 1–29 (MAPLPPRGLVPSLLWCLSLFLSLPGPVWL) are cleaved as a signal peptide. At 30–362 (QPSPPPHPSP…GFFAEMTEDE (333 aa)) the chain is on the extracellular side. The CXXC signature appears at 46 to 49 (CHTC). Cystine bridges form between cysteine 46-cysteine 49, cysteine 155-cysteine 169, cysteine 163-cysteine 181, and cysteine 183-cysteine 192. Residues 153-193 (LPCPGGTERPCGGYGQCEGEGTRGGSGHCDCQAGYGGEACG) form the EGF-like 1 domain. The N-linked (GlcNAc...) asparagine glycan is linked to asparagine 205. 2 FU repeats span residues 208-255 (HLVC…EQAT) and 268-315 (SYEC…VVCP). A CXXC motif is present at residues 278–281 (CLGC). Cystine bridges form between cysteine 278–cysteine 281, cysteine 309–cysteine 321, cysteine 314–cysteine 330, and cysteine 332–cysteine 343. Positions 305–342 (DVDECETVVCPGENEKCENTEGGYRCVCAEGYRQEDGI) constitute an EGF-like 2; calcium-binding domain. Residues 363-383 (MVVLQQMFFGVIICALATLAA) form a helical membrane-spanning segment. Position 384 (lysine 384) is a topological domain, cytoplasmic. A helical transmembrane segment spans residues 385 to 405 (GDLVFTAIFIGAVAAMTGYWL). Over 406–420 (SERSDRVLEGFIKGR) the chain is Extracellular.

Belongs to the CRELD family. As to expression, expressed in myoblast C2C12 cells (at protein level).

It is found in the membrane. The catalysed reaction is Catalyzes the rearrangement of -S-S- bonds in proteins.. Functionally, protein disulfide isomerase. Promotes the localization of acetylcholine receptors (AChRs) to the plasma membrane. The polypeptide is Protein disulfide isomerase Creld1 (Creld1) (Mus musculus (Mouse)).